Consider the following 2145-residue polypeptide: Mediator of RNA polymerase II transcription subunit 12-like protein (2145 aa).

The interval 1–30 (MAAFGLLSYEQRPLKRPRLGPPDVYPQDPK) is disordered. Thr-462 bears the Phosphothreonine mark. Residues 1436-1455 (ELEKGQHLGSSSKKERDRQK) show a composition bias toward basic and acidic residues. 3 disordered regions span residues 1436–1460 (ELEK…KSMS), 1721–1802 (RSYY…ISSQ), and 2029–2145 (DAVL…PSHF). The segment covering 1768 to 1777 (TKGRKRKTKS) has biased composition (basic residues). A compositionally biased stretch (low complexity) spans 2052–2069 (RQPQVRQQQRLLQMQQPQ). The span at 2070–2079 (QPQPQQPPQP) shows a compositional bias: pro residues. Polar residues predominate over residues 2089–2099 (TLGLQAMQPQQ). The segment covering 2104-2124 (RQGLQQTQQQQQTAALVRQLQ) has biased composition (low complexity). Over residues 2125–2136 (KQLSSNQPQQGV) the composition is skewed to polar residues.

This sequence belongs to the Mediator complex subunit 12 family. In terms of assembly, may be a component of the Mediator complex, which is known to be composed of MED1, MED4, MED6, MED7, MED8, MED9, MED10, MED11, MED12, MED13, MED13L, MED14, MED15, MED16, MED17, MED18, MED19, MED20, MED21, MED22, MED23, MED24, MED25, MED26, MED27, MED29, MED30, MED31, CCNC, CDK8 and CDC2L6/CDK11. The MED12, MED13, CCNC and CDK8 subunits form a distinct module termed the CDK8 module. Mediator containing the CDK8 module is less active than Mediator lacking this module in supporting transcriptional activation. Individual preparations of the Mediator complex lacking one or more distinct subunits have been variously termed ARC, CRSP, DRIP, PC2, SMCC and TRAP.

It is found in the nucleus. Its function is as follows. May be a component of the Mediator complex, a coactivator involved in the regulated transcription of nearly all RNA polymerase II-dependent genes. Mediator functions as a bridge to convey information from gene-specific regulatory proteins to the basal RNA polymerase II transcription machinery. Mediator is recruited to promoters by direct interactions with regulatory proteins and serves as a scaffold for the assembly of a functional preinitiation complex with RNA polymerase II and the general transcription factors. The chain is Mediator of RNA polymerase II transcription subunit 12-like protein (MED12L) from Homo sapiens (Human).